Consider the following 814-residue polypeptide: G-type lectin S-receptor-like serine/threonine-protein kinase At1g61370 (814 aa).

A signal peptide spans 1 to 25; it reads MGKIGIVFFASLLFLLIIFPSCAFA. The Bulb-type lectin domain maps to 26 to 145; the sequence is AITRASPLSI…VSERNLWESF (120 aa). Residues 26–433 lie on the Extracellular side of the membrane; the sequence is AITRASPLSI…SELAGSNRVK (408 aa). N-linked (GlcNAc...) asparagine glycosylation is found at Asn-43, Asn-54, Asn-89, Asn-95, Asn-253, and Asn-271. The EGF-like domain occupies 282 to 318; it reads PVSSCDVYNTCGPFGLCIRSNPPKCECLKGFVPKSDE. Disulfide bonds link Cys-286–Cys-298 and Cys-292–Cys-306. Residues Asn-324, Asn-334, Asn-340, and Asn-383 are each glycosylated (N-linked (GlcNAc...) asparagine). In terms of domain architecture, PAN spans 337 to 423; that stretch reads CDVNSSATAQ…GETLSIRLAS (87 aa). 2 disulfides stabilise this stretch: Cys-376-Cys-397 and Cys-380-Cys-386. A helical membrane pass occupies residues 434 to 454; the sequence is IIVASIVSISVFMILVFASYW. Residues 455 to 814 are Cytoplasmic-facing; sequence YWRYKAKQND…NITQTAIVGR (360 aa). The region spanning 501 to 786 is the Protein kinase domain; sequence FSMENKLGQG…DLPKPKQPVF (286 aa). Residues 507-515 and Lys-529 contribute to the ATP site; that span reads LGQGGFGPV. Phosphoserine is present on residues Ser-535 and Ser-550. The caM-binding stretch occupies residues 590-607; the sequence is TKKLELDWPKRFEIIQGI. Catalysis depends on Asp-626, which acts as the Proton acceptor. Ser-630 and Ser-643 each carry phosphoserine. At Thr-660 the chain carries Phosphothreonine. Ser-703, Ser-704, Ser-797, and Ser-802 each carry phosphoserine. At Thr-809 the chain carries Phosphothreonine.

It belongs to the protein kinase superfamily. Ser/Thr protein kinase family.

Its subcellular location is the cell membrane. The enzyme catalyses L-seryl-[protein] + ATP = O-phospho-L-seryl-[protein] + ADP + H(+). It catalyses the reaction L-threonyl-[protein] + ATP = O-phospho-L-threonyl-[protein] + ADP + H(+). This chain is G-type lectin S-receptor-like serine/threonine-protein kinase At1g61370, found in Arabidopsis thaliana (Mouse-ear cress).